A 2048-amino-acid polypeptide reads, in one-letter code: Fanconi anemia group M protein (2048 aa).

Residues 1-37 (MSGRQRTLFQTWGSSISRSSGTPGCSSGTERPQSPGS) show a composition bias toward polar residues. The tract at residues 1–45 (MSGRQRTLFQTWGSSISRSSGTPGCSSGTERPQSPGSSKAPLPAA) is disordered. The residue at position 34 (Ser-34) is a Phosphoserine. The Helicase ATP-binding domain maps to 98-266 (ISRAALFCNT…QVITNLLIGQ (169 aa)). Residue 111-118 (LPTGLGKT) coordinates ATP. The DEAH box signature appears at 214–217 (DEAH). The region spanning 452–627 (KLEEVVIEHF…VLHFYQRSPR (176 aa)) is the Helicase C-terminal domain. The interval 661–800 (SIFSYRDGMR…TSTFIAPRNE (140 aa)) is interaction with CENPS/CENPSX. Disordered stretches follow at residues 1433–1476 (NVLN…NFPK), 1518–1540 (LSEEDAEYVSSDENDESENEQDS), and 1668–1809 (ILPD…HTSL). A compositionally biased stretch (acidic residues) spans 1518–1538 (LSEEDAEYVSSDENDESENEQ). Phosphoserine is present on residues Ser-1673 and Ser-1674. 3 stretches are compositionally biased toward polar residues: residues 1703-1745 (HCLN…ISEV), 1753-1767 (HNEVQSTTPPFTTVD), and 1786-1797 (EDSSTSGASCSK). The interaction with FAAP24 stretch occupies residues 1727–2048 (LAKQSKQTSL…LNQDRLKSDI (322 aa)).

Belongs to the DEAD box helicase family. DEAH subfamily. FANCM sub-subfamily. Component of the Fanconi anemia (FA) core complex, which consists of CENPS, CENPX, FANCA, FANCB, FANCC, FANCE, FANCF, FANCG, FANCL, FANCM, FAAP24 and FAAP100. The FA core complex associates with Bloom syndrome (BLM) complex, which consists of at least BLM, DNA topoisomerase 3-alpha/TOP3A, RMI1/BLAP75, RPA1/RPA70 and RPA2/RPA32. This supercomplex between FA and BLM complexes has been called BRAFT. Forms a discrete complex with CENPS and CENPX, called FANCM-MHF; this interaction stimulates DNA binding and replication fork remodeling by FANCM and stabilizes the binding partners. Forms a heterodimer with FAAP24; this interaction increases FANCM single-stranded DNA-binding activity. In terms of processing, phosphorylated; hyperphosphorylated in response to genotoxic stress. In terms of tissue distribution, expressed in germ cells of fetal and adult ovaries. In fetal ovaries, it is present in oogonia but expression is stronger in pachytene stage oocytes. Expressed in oocytes arrested at the diplotene stage of prophase I during the last trimester of pregnancy and in adults. Expressed in the testis.

It localises to the nucleus. It catalyses the reaction ATP + H2O = ADP + phosphate + H(+). Functionally, DNA-dependent ATPase component of the Fanconi anemia (FA) core complex. Required for the normal activation of the FA pathway, leading to monoubiquitination of the FANCI-FANCD2 complex in response to DNA damage, cellular resistance to DNA cross-linking drugs, and prevention of chromosomal breakage. In complex with CENPS and CENPX, binds double-stranded DNA (dsDNA), fork-structured DNA (fsDNA) and Holliday junction substrates. Its ATP-dependent DNA branch migration activity can process branched DNA structures such as a movable replication fork. This activity is strongly stimulated in the presence of CENPS and CENPX. In complex with FAAP24, efficiently binds to single-strand DNA (ssDNA), splayed-arm DNA, and 3'-flap substrates. In vitro, on its own, strongly binds ssDNA oligomers and weakly fsDNA, but does not bind to dsDNA. This Homo sapiens (Human) protein is Fanconi anemia group M protein (FANCM).